A 339-amino-acid chain; its full sequence is MKIMVAMSGGVDSTMTAKILKEAGHEIEGCYMKLHQKPGYHEENIRKVKKVGEYLGIKVHILDLQDKFNEFVYDPFVRLYKEGKTPNPCALCNRFIKLGALLNFAKQNGCEKLATGHYVQIIDGFVTMAKDPSKDQSYFLAQVPKEVLKDVIFPLGDKFKADIKELAREVPVLNEFATQPESSEICFVEDTYIEILNKHYNTNLPGNVVDKNGNVIGRHQGYMHYTIGKRRGFEVFGAHEPHFVLKINADKNEIVVGSKDDLAQKIVELENVNLFIDEDEFECETKIRYRSPKLEASVKIDKQNKTAVVALSQNALGVAQGQLCVMYDGERVIASGFIK.

ATP is bound by residues A6–S13 and M32. C92 (nucleophile) is an active-site residue. Residues C92 and C186 are joined by a disulfide bond. Residue G116 coordinates ATP. The tract at residues K134–Q136 is interaction with tRNA. C186 functions as the Cysteine persulfide intermediate in the catalytic mechanism. The segment at R288–Y289 is interaction with tRNA.

Belongs to the MnmA/TRMU family.

It localises to the cytoplasm. It catalyses the reaction S-sulfanyl-L-cysteinyl-[protein] + uridine(34) in tRNA + AH2 + ATP = 2-thiouridine(34) in tRNA + L-cysteinyl-[protein] + A + AMP + diphosphate + H(+). Catalyzes the 2-thiolation of uridine at the wobble position (U34) of tRNA, leading to the formation of s(2)U34. This chain is tRNA-specific 2-thiouridylase MnmA, found in Campylobacter curvus (strain 525.92).